We begin with the raw amino-acid sequence, 211 residues long: Large ribosomal subunit protein eL13 (211 aa).

Residue Lys16 is modified to N6-acetyllysine. Phosphoserine is present on residues Ser52 and Ser77. Glycyl lysine isopeptide (Lys-Gly) (interchain with G-Cter in SUMO2) cross-links involve residues Lys123 and Lys145. Lys174 participates in a covalent cross-link: Glycyl lysine isopeptide (Lys-Gly) (interchain with G-Cter in SUMO1); alternate. Residues Lys174 and Lys177 each participate in a glycyl lysine isopeptide (Lys-Gly) (interchain with G-Cter in SUMO2); alternate cross-link. N6-acetyllysine; alternate is present on Lys177.

Belongs to the eukaryotic ribosomal protein eL13 family. In terms of assembly, component of the 60S large ribosomal subunit (LSU).

The protein localises to the cytoplasm. In terms of biological role, component of the ribosome, a large ribonucleoprotein complex responsible for the synthesis of proteins in the cell. The small ribosomal subunit (SSU) binds messenger RNAs (mRNAs) and translates the encoded message by selecting cognate aminoacyl-transfer RNA (tRNA) molecules. The large subunit (LSU) contains the ribosomal catalytic site termed the peptidyl transferase center (PTC), which catalyzes the formation of peptide bonds, thereby polymerizing the amino acids delivered by tRNAs into a polypeptide chain. The nascent polypeptides leave the ribosome through a tunnel in the LSU and interact with protein factors that function in enzymatic processing, targeting, and the membrane insertion of nascent chains at the exit of the ribosomal tunnel. As part of the LSU, it is probably required for its formation and the maturation of rRNAs. Plays a role in bone development. In Bos taurus (Bovine), this protein is Large ribosomal subunit protein eL13 (RPL13).